We begin with the raw amino-acid sequence, 307 residues long: Regulating synaptic membrane exocytosis protein 3 (307 aa).

Residues 86 to 120 (STETGIAVEMRSRVTRQGSRESTDGSTNSNSSEGT) are disordered. The segment covering 109–119 (DGSTNSNSSEG) has biased composition (polar residues). The C2 domain maps to 155–273 (PMGDVHIAIM…DLSAAVTGWY (119 aa)). A phosphoserine mark is found at Ser294 and Ser297.

As to quaternary structure, binds PPFIA3. Does not bind RAB3.

It is found in the synapse. Its function is as follows. Regulates synaptic membrane exocytosis. The sequence is that of Regulating synaptic membrane exocytosis protein 3 (Rims3) from Mus musculus (Mouse).